A 164-amino-acid polypeptide reads, in one-letter code: uncharacterized protein (164 aa).

At serine 117 the chain carries Phosphoserine.

This is an uncharacterized protein from Bacillus subtilis (strain 168).